Reading from the N-terminus, the 527-residue chain is Optineurin (527 aa).

2 disordered regions span residues 1 to 32 (MSHQ…HPNL) and 101 to 143 (SHEN…KDQL). The stretch at 38–170 (EELLQQMKEL…VSELQLKLNS (133 aa)) forms a coiled coil. The tract at residues 58–209 (MKLNNQAMKG…GPTRTVSTSR (152 aa)) is interaction with Rab8. An LIR motif is present at residues 176–181 (DSFVEI). Ser-177 bears the Phosphoserine; by TBK1 mark. Positions 186–197 (GEAEGSVKEIKH) are enriched in basic and acidic residues. 2 disordered regions span residues 186–214 (GEAE…LSKY) and 262–292 (SDFE…EKGL). Phosphoserine is present on Ser-198. A compositionally biased stretch (polar residues) spans 201 to 210 (PTRTVSTSRA). Positions 239–458 (CLREGNQKVE…LLKENDAFED (220 aa)) form a coiled coil. 2 stretches are compositionally biased toward basic and acidic residues: residues 262 to 274 (SDFE…RSEI) and 281 to 292 (STEKENDEEKGL). Residues 361 to 527 (TRKESEKVDR…LQIHVMDCII (167 aa)) are interaction with HD. Residues 362 to 470 (RKESEKVDRA…RQSLMEMQSR (109 aa)) are interaction with MYO6. The short motif at 424-429 (DFHAER) is the UBAN element. Phosphoserine is present on Ser-476. The segment at 497-527 (QRNIPIHSCPKCGEVLPDIDTLQIHVMDCII) adopts a CCHC NOA-type zinc-finger fold. Positions 505, 508, 521, and 525 each coordinate Zn(2+).

Self-associates. Interacts with HD. Interacts with GTF3A. Interacts with MYO6. Interacts (via UBAN) with ubiquitinated TFRC. Interacts with GTP-bound Rab8 (RAB8A and/or RAB8B). Interacts with TBC1D17. Interacts with TBK1. Interacts with TRAF3. Binds to linear ubiquitin chains. Interacts with LC3 family members MAP1LC3A, MAP1LC3B, GABARAP, GABARAPL1 and GABARAPL2; OPTN phosphorylation increases the association (at least with MAP1LC3B). Interacts with RAB12; the interaction may be indirect. Interacts with TBK1; this interaction leads to the Golgi localization of TBK1 and its subsequent activation. Interacts with palmitoyltransferase ZDHHC17/HIP14; the interaction does not lead to palmitoylation of OPTN. Interacts with CYLD. Interacts with TOM1; the interaction is indirect and is mediated by MYO6, which acts as a bridge between TOM1 and OPTN. Interacts with USP12; the interaction is independent of USP12 deubiquitinase activity and may be involved in regulation of autophagic flux. In terms of processing, phosphorylated by TBK1, leading to restrict bacterial proliferation in case of infection.

It is found in the cytoplasm. Its subcellular location is the perinuclear region. It localises to the golgi apparatus. The protein localises to the trans-Golgi network. The protein resides in the cytoplasmic vesicle. It is found in the autophagosome. Its subcellular location is the recycling endosome. Its function is as follows. Plays an important role in the maintenance of the Golgi complex, in membrane trafficking, in exocytosis, through its interaction with myosin VI and Rab8. Links myosin VI to the Golgi complex and plays an important role in Golgi ribbon formation. Negatively regulates the induction of IFNB in response to RNA virus infection. Plays a neuroprotective role in the eye and optic nerve. Probably part of the TNF-alpha signaling pathway that can shift the equilibrium toward induction of cell death. May act by regulating membrane trafficking and cellular morphogenesis via a complex that contains Rab8 and huntingtin (HD). Mediates the interaction of Rab8 with the probable GTPase-activating protein TBC1D17 during Rab8-mediated endocytic trafficking, such as that of transferrin receptor (TFRC/TfR); regulates Rab8 recruitment to tubules emanating from the endocytic recycling compartment. Autophagy receptor that interacts directly with both the cargo to become degraded and an autophagy modifier of the MAP1 LC3 family; targets ubiquitin-coated bacteria (xenophagy) and appears to function in the same pathway as SQSTM1 and CALCOCO2/NDP52. In Pongo abelii (Sumatran orangutan), this protein is Optineurin (OPTN).